The chain runs to 319 residues: tRNA uridine(34) hydroxylase (319 aa).

The 95-residue stretch at 125–219 (LDENTVVIDA…YGKDPEVQGD (95 aa)) folds into the Rhodanese domain. Cysteine 179 (cysteine persulfide intermediate) is an active-site residue.

It belongs to the TrhO family.

The enzyme catalyses uridine(34) in tRNA + AH2 + O2 = 5-hydroxyuridine(34) in tRNA + A + H2O. Functionally, catalyzes oxygen-dependent 5-hydroxyuridine (ho5U) modification at position 34 in tRNAs. The polypeptide is tRNA uridine(34) hydroxylase (Lactococcus lactis subsp. cremoris (strain MG1363)).